The chain runs to 217 residues: N-(5'-phosphoribosyl)anthranilate isomerase (217 aa).

This sequence belongs to the TrpF family.

It catalyses the reaction N-(5-phospho-beta-D-ribosyl)anthranilate = 1-(2-carboxyphenylamino)-1-deoxy-D-ribulose 5-phosphate. It functions in the pathway amino-acid biosynthesis; L-tryptophan biosynthesis; L-tryptophan from chorismate: step 3/5. In Synechococcus elongatus (strain ATCC 33912 / PCC 7942 / FACHB-805) (Anacystis nidulans R2), this protein is N-(5'-phosphoribosyl)anthranilate isomerase.